Consider the following 143-residue polypeptide: Transcriptional regulator MraZ (143 aa).

2 consecutive SpoVT-AbrB domains span residues 5-47 and 76-119; these read EFDH…TLEE and AVEV…DRET.

Belongs to the MraZ family. As to quaternary structure, forms oligomers.

The protein resides in the cytoplasm. It localises to the nucleoid. This chain is Transcriptional regulator MraZ, found in Staphylococcus epidermidis (strain ATCC 35984 / DSM 28319 / BCRC 17069 / CCUG 31568 / BM 3577 / RP62A).